Consider the following 82-residue polypeptide: Large ribosomal subunit protein bL31B (82 aa).

Belongs to the bacterial ribosomal protein bL31 family. Type B subfamily. In terms of assembly, part of the 50S ribosomal subunit after the end of exponential growth.

In terms of biological role, while neither of the L31 paralogs is essential, this protein does not seem to function as the main L31 protein. Has a higher affinity for 70S ribosomes than the zinc-containing L31 paralog; is able to displace it to varying extents, even under zinc-replete conditions. This chain is Large ribosomal subunit protein bL31B (rpmE2), found in Bacillus subtilis (strain 168).